Reading from the N-terminus, the 111-residue chain is uncharacterized protein (111 aa).

Transmembrane regions (helical) follow at residues 4-21 (FITALPIVLLLGFSFVSF), 28-47 (LVYFRLALGLFSLVGLYMIY), 51-73 (TGIRYFIIYLYASWIVLAAVTAF), and 80-102 (SFFFGGLVMTMGYLTYMLIYLGM).

The protein resides in the cell membrane. This is an uncharacterized protein from Bacillus subtilis (strain 168).